Reading from the N-terminus, the 534-residue chain is Major facilitator-type transporter sor6 (534 aa).

Residues asparagine 29 and asparagine 36 are each glycosylated (N-linked (GlcNAc...) asparagine). The next 12 helical transmembrane spans lie at 66-86 (WFLT…SSAY), 103-123 (LFIT…AVWG), 160-180 (AMVA…LIVL), 182-202 (FLAG…IADL), 209-229 (GLAM…GPIV), 241-261 (WVQG…VIFV), 318-338 (IVLI…MFLG), 354-374 (FGGL…GYAI), 395-415 (LPPA…FAWT), 424-444 (VSIV…LPIV), 456-476 (ASVL…FPLF), and 486-506 (IHWA…FPFF).

This sequence belongs to the major facilitator superfamily. Sugar transporter (TC 2.A.1.1) family.

The protein resides in the membrane. In terms of biological role, major facilitator-type transporter; part of the gene cluster that mediates the biosynthesis of sorbicillinoids, a diverse group of yellow secondary metabolites that restrict growth of competing pathogenic fungi but not of bacteria. This Hypocrea jecorina (strain QM6a) (Trichoderma reesei) protein is Major facilitator-type transporter sor6.